We begin with the raw amino-acid sequence, 263 residues long: Small ribosomal subunit protein eS4 (263 aa).

One can recognise an S4 RNA-binding domain in the interval 42–104 (LPLIIFLRNR…TGEHFRLVYD (63 aa)).

The protein belongs to the eukaryotic ribosomal protein eS4 family.

This chain is Small ribosomal subunit protein eS4 (RPS4), found in Gallus gallus (Chicken).